Here is a 101-residue protein sequence, read N- to C-terminus: MAQKIRIKLKSYDYNLIDKSAEKIVQAVKNTKAVVSGPIPLPSKKEVYTVLRSPHVYKESREQFQLSTYKRLIDIYSNSSKTIDALMKLELPSGVEVSIKA.

It belongs to the universal ribosomal protein uS10 family. As to quaternary structure, part of the 30S ribosomal subunit.

Functionally, involved in the binding of tRNA to the ribosomes. In Amoebophilus asiaticus (strain 5a2), this protein is Small ribosomal subunit protein uS10.